We begin with the raw amino-acid sequence, 60 residues long: Cytochrome c oxidase subunit 7, mitochondrial (60 aa).

Over 2 to 29 (ANKVIQLQKIFQSSTKPLWWRHPRSALY) the chain is Mitochondrial matrix. Residues 30-53 (LYPFYAIFAVAVVTPLLYIPNAIR) traverse the membrane as a helical segment. Residues 54-60 (GIKAKKA) are Mitochondrial intermembrane-facing.

This sequence belongs to the cytochrome c oxidase VIIa family. As to quaternary structure, component of the cytochrome c oxidase (complex IV, CIV), a multisubunit enzyme composed of 12 subunits. The complex is composed of a catalytic core of 3 subunits COX1, COX2 and COX3, encoded in the mitochondrial DNA, and 9 supernumerary subunits COX4, COX5A (or COX5B), COX6, COX7, COX8, COX9, COX12, COX13 and COX26, which are encoded in the nuclear genome. The complex exists as a monomer or a dimer and forms supercomplexes (SCs) in the inner mitochondrial membrane with a dimer of ubiquinol-cytochrome c oxidoreductase (cytochrome b-c1 complex, complex III, CIII), resulting in 2 different assemblies (supercomplexes III(2)IV and III(2)IV(2)).

It is found in the mitochondrion inner membrane. It functions in the pathway energy metabolism; oxidative phosphorylation. Its function is as follows. Component of the cytochrome c oxidase, the last enzyme in the mitochondrial electron transport chain which drives oxidative phosphorylation. The respiratory chain contains 3 multisubunit complexes succinate dehydrogenase (complex II, CII), ubiquinol-cytochrome c oxidoreductase (cytochrome b-c1 complex, complex III, CIII) and cytochrome c oxidase (complex IV, CIV), that cooperate to transfer electrons derived from NADH and succinate to molecular oxygen, creating an electrochemical gradient over the inner membrane that drives transmembrane transport and the ATP synthase. Cytochrome c oxidase is the component of the respiratory chain that catalyzes the reduction of oxygen to water. Electrons originating from reduced cytochrome c in the intermembrane space (IMS) are transferred via the dinuclear copper A center (CU(A)) of COX2 and heme A of COX1 to the active site in COX1, a binuclear center (BNC) formed by heme A3 and copper B (CU(B)). The BNC reduces molecular oxygen to 2 water molecules using 4 electrons from cytochrome c in the IMS and 4 protons from the mitochondrial matrix. This is Cytochrome c oxidase subunit 7, mitochondrial (COX7) from Saccharomyces cerevisiae (strain ATCC 204508 / S288c) (Baker's yeast).